A 397-amino-acid polypeptide reads, in one-letter code: Elongation factor Tu (397 aa).

The tr-type G domain maps to 10 to 206 (KPHVNIGTIG…AVDESIPDPV (197 aa)). The G1 stretch occupies residues 19–26 (GHVDHGKT). 19–26 (GHVDHGKT) provides a ligand contact to GTP. Residue Thr-26 coordinates Mg(2+). The interval 62–66 (GITIN) is G2. Positions 83 to 86 (DAPG) are G3. GTP contacts are provided by residues 83–87 (DAPGH) and 138–141 (NKSD). The segment at 138 to 141 (NKSD) is G4. The interval 176 to 178 (SAL) is G5.

Belongs to the TRAFAC class translation factor GTPase superfamily. Classic translation factor GTPase family. EF-Tu/EF-1A subfamily. Monomer.

It is found in the cytoplasm. The catalysed reaction is GTP + H2O = GDP + phosphate + H(+). Functionally, GTP hydrolase that promotes the GTP-dependent binding of aminoacyl-tRNA to the A-site of ribosomes during protein biosynthesis. The polypeptide is Elongation factor Tu (Mycobacteroides abscessus (strain ATCC 19977 / DSM 44196 / CCUG 20993 / CIP 104536 / JCM 13569 / NCTC 13031 / TMC 1543 / L948) (Mycobacterium abscessus)).